A 1158-amino-acid chain; its full sequence is Transient receptor potential cation channel subfamily M member 5 (1158 aa).

The Cytoplasmic portion of the chain corresponds to 1 to 729 (MQTTQSSCPG…LTRWRKFWGA (729 aa)). Serine 129 is modified (phosphoserine; by PKC). Residues cysteine 341, aspartate 350, aspartate 353, and glutamate 354 each contribute to the Ca(2+) site. A disordered region spans residues 488 to 507 (GRRMEERGPPKRPAGQKWLP). A coiled-coil region spans residues 552-572 (KIIKEMSHLEKEAEVARTMRE). The helical transmembrane segment at 730–754 (PVTVFLGNVVMYFAFLFLFTYVLLV) threads the bilayer. Residues 755–764 (DFRPPPQGPS) are Extracellular-facing. Residues 765–784 (GSEVTLYFWVFTLVLEEIRQ) form a helical membrane-spanning segment. Ca(2+) contacts are provided by glutamate 781 and glutamine 784. Topologically, residues 785–805 (GFFTDEDTHLVKKFTLYVEDN) are cytoplasmic. Residues 806–824 (WNKCDMVAIFLFIVGVTCR) traverse the membrane as a helical segment. Ca(2+)-binding residues include asparagine 807 and aspartate 810. Residues 825-831 (MVPSVFE) lie on the Extracellular side of the membrane. Residues 832-854 (AGRTVLAIDFMVFTLRLIHIFAI) traverse the membrane as a helical segment. Residues 855–863 (HKQLGPKII) lie on the Cytoplasmic side of the membrane. Residues 864 to 893 (IVERMMKDVFFFLFFLSVWLVAYGVTTQAL) traverse the membrane as a helical segment. Over 894–902 (LHPHDGRLE) the chain is Extracellular. The segment at residues 903–938 (WIFRRVLYRPYLQIFGQIPLDEIDEARVNCSLHPLL) is an intramembrane region (pore-forming). The short motif at 917–919 (FGQ) is the Selectivity filter element. At 939-950 (LESSASCPNLYA) the chain is on the extracellular side. Residues 951–985 (NWLVILLLVTFLLVTNVLLMNLLIAMFSYTFQVVQ) traverse the membrane as a helical segment. The Cytoplasmic segment spans residues 986–1158 (GNADMFWKFQ…LESGLPPSDT (173 aa)). Glutamate 1002 lines the Ca(2+) pocket. The span at 1127–1141 (TYSSSQNCGCRSQPA) shows a compositional bias: polar residues. The tract at residues 1127–1158 (TYSSSQNCGCRSQPASARDREYLESGLPPSDT) is disordered.

This sequence belongs to the transient receptor (TC 1.A.4) family. LTrpC subfamily. TRPM5 sub-subfamily. Homotetramer. Post-translationally, multiple phosphorylation sites regulate the Gq/ TRPM5 modulation axis, with the Ser-129 playing a substantial role in this positive modulation. In terms of tissue distribution, strongly expressed in liver, heart, testis, brain and kidney. Detected in fetal liver, kidney, spleen, brain, heart and lung, and in adult skin, eyes, spleen, stomach, small intestine, colon, lung, bladder, pancreas and thymus. Biallelically expressed at all stages and tissues examined. Also expressed in subsets of taste receptor cells of the tongue, in olfactory sensory neurons of the main olfactory epithelium and in the vomeronasal organ.

The protein localises to the cell membrane. It catalyses the reaction Na(+)(in) = Na(+)(out). It carries out the reaction K(+)(in) = K(+)(out). With respect to regulation, ca(2+)-activated cation channel. Displays voltage dependence modulation. Regulated by PI(4,5)P2 levels. PI(4,5)P 2 reverses the Ca(2+) -induced desensitization of channels. Inhibited by flufenamic acid with an IC(50) of 24.5 uM and spermine with an IC(50) of 37 uM. Is a highly temperature-sensitive, heat activated channel showing a steep increase of inward currents at temperatures between 15 and 35 degrees Celsius. Heat activation is due to a shift of the voltage-dependent activation curve to negative potentials. The channel is blocked by extracellular acidification. In terms of biological role, monovalent cation-selective ion channel activated by intracellular Ca(2+) in a voltage- and temperature-dependent manner. Mediates the transport of Na(+), K(+) and Cs(+) ions equally well. Activated directly by increase in intracellular Ca(2+), but is impermeable to it. The activation mechanism of TRPM5 involves a multistep process. TRPM5 activation involves ligand binding (i.e., tastant molecule, glucose stimulation) to Gq/G-protein coupled receptors (GPCR) and leads to the breakdown of phosphatidylinositol bisphosphate (PIP2) into diacylglycerol (DAG) and inositol trisphosphate (IP3), IP3 binds to its receptors in the endoplasmic reticulum and cause Ca(2+) release. Simultaneously with the intracellular Ca(2+) release, DAG activates the protein kinase C (PKC), which phosphorylates the TRPM5 channel. This phosphorylation combined with the bound Ca(2+), leads to a robust inward current allowing the entry of sodium ions (Na+) into the cell. This ion influx depolarizes the cell membrane, generating action potentials that propagate TRPM5 signals. Is a key player in sensing sweet, umami and bitter stimuli. May also be involved in sensing semiochemicals. Involved in insulin secretion by pancreatic beta cells. This Mus musculus (Mouse) protein is Transient receptor potential cation channel subfamily M member 5.